The sequence spans 405 residues: Phosphoglycerate kinase (405 aa).

Residues 23-25, R39, 62-65, R121, and R154 each bind substrate; these read DFN and HLGR. ATP is bound by residues K207, G298, E329, and 355–358; that span reads GGDT.

It belongs to the phosphoglycerate kinase family. In terms of assembly, monomer.

It localises to the cytoplasm. It catalyses the reaction (2R)-3-phosphoglycerate + ATP = (2R)-3-phospho-glyceroyl phosphate + ADP. The protein operates within carbohydrate degradation; glycolysis; pyruvate from D-glyceraldehyde 3-phosphate: step 2/5. This Campylobacter hominis (strain ATCC BAA-381 / DSM 21671 / CCUG 45161 / LMG 19568 / NCTC 13146 / CH001A) protein is Phosphoglycerate kinase.